The primary structure comprises 416 residues: Probable tRNA pseudouridine synthase D (416 aa).

Asp83 serves as the catalytic Nucleophile. Positions 158-379 (GFPNYFGYQR…PGGRRELLIR (222 aa)) constitute a TRUD domain.

This sequence belongs to the pseudouridine synthase TruD family.

The enzyme catalyses uridine(13) in tRNA = pseudouridine(13) in tRNA. Its function is as follows. Could be responsible for synthesis of pseudouridine from uracil-13 in transfer RNAs. This is Probable tRNA pseudouridine synthase D from Thermococcus onnurineus (strain NA1).